We begin with the raw amino-acid sequence, 1479 residues long: Chromosome partition protein MukB (1479 aa).

34–41 (GGNGAGKS) contacts ATP. 5 coiled-coil regions span residues 337 to 418 (LNLV…QYQQ), 511 to 604 (QAER…APVW), 780 to 810 (RAAR…DVQK), 847 to 1116 (ELDR…AKAG), and 1206 to 1265 (DDPV…LQAV). The flexible hinge stretch occupies residues 666 to 783 (PGGSEDPRLN…EVPLFGRAAR (118 aa)).

It belongs to the SMC family. MukB subfamily. Homodimerization via its hinge domain. Binds to DNA via its C-terminal region. Interacts, and probably forms a ternary complex, with MukE and MukF via its C-terminal region. The complex formation is stimulated by calcium or magnesium. Interacts with tubulin-related protein FtsZ.

Its subcellular location is the cytoplasm. It is found in the nucleoid. Its function is as follows. Plays a central role in chromosome condensation, segregation and cell cycle progression. Functions as a homodimer, which is essential for chromosome partition. Involved in negative DNA supercoiling in vivo, and by this means organize and compact chromosomes. May achieve or facilitate chromosome segregation by condensation DNA from both sides of a centrally located replisome during cell division. The chain is Chromosome partition protein MukB from Pectobacterium atrosepticum (strain SCRI 1043 / ATCC BAA-672) (Erwinia carotovora subsp. atroseptica).